A 257-amino-acid chain; its full sequence is MEAGKSAEDVFNISRLYLYINDKAILKDITIKIPNNSIFGIMGPSGSGKSTLLKVLNRLIEIYDSKIKVDGKVLYFGKDIFQIDAIKLRKEVGMVFQQPNPFPHLSIYDNIAYPLKSHGIKEKREIKKIVEECLRKVGLWKEVYDRLNSPASQLSGGQQQRLTIARALALKPKVLLMDEPTSMIDIVNSQAIEKLITELKNEIAIVIVSHNPQQVARVADYVAFLYNGELVEWGSSNEIFTSPKNELTEKYVIGRIS.

Residues 11 to 252 (FNISRLYLYI…PKNELTEKYV (242 aa)) form the ABC transporter domain. 43–50 (GPSGSGKS) serves as a coordination point for ATP.

Belongs to the ABC transporter superfamily. Phosphate importer (TC 3.A.1.7) family. In terms of assembly, the complex is composed of two ATP-binding proteins (PstB), two transmembrane proteins (PstC and PstA) and a solute-binding protein (PstS).

It localises to the cell membrane. It carries out the reaction phosphate(out) + ATP + H2O = ADP + 2 phosphate(in) + H(+). Functionally, part of the ABC transporter complex PstSACB involved in phosphate import. Responsible for energy coupling to the transport system. The polypeptide is Phosphate import ATP-binding protein PstB (Saccharolobus solfataricus (strain ATCC 35092 / DSM 1617 / JCM 11322 / P2) (Sulfolobus solfataricus)).